Here is a 262-residue protein sequence, read N- to C-terminus: Cerebellar degeneration-related antigen 1 (262 aa).

34 consecutive repeat copies span residues 3-8 (WLEDVD), 9-14 (FLEDVP), 15-20 (LLEDIP), 21-26 (LLEDVP), 27-32 (LLEDVP), 33-38 (LLEDTS), 39-44 (RLEDIN), 45-50 (LMEDMA), 51-56 (LLEDVD), 57-62 (LLEDTD), 63-68 (FLEDLD), 69-74 (FSEAMD), 75-80 (LREDKD), 81-86 (FLEDMD), 87-92 (SLEDMA), 93-98 (LLEDVD), 99-104 (LLEDTD), 105-110 (FLEDPD), 111-116 (FLEAID), 117-122 (LREDKD), 123-128 (FLEDMD), 129-134 (SLEDLE), 135-140 (AIGRCG), 141-146 (FSGRHG), 147-152 (FFGRRR), 153-158 (FSGRPK), 159-164 (LSGRLG), 165-170 (LLGRRG), 171-176 (FSGRLG), 177-182 (GYWKTW), 183-188 (IFWKTW), 189-194 (IFWKTW), 195-200 (IFRKTY), and 201-206 (IGWKTW). The tract at residues 3–140 (WLEDVDFLED…EDLEAIGRCG (138 aa)) is 23 X 6 AA approximate repeats. Residues 141–176 (FSGRHGFFGRRRFSGRPKLSGRLGLLGRRGFSGRLG) are 6 X 6 AA approximate repeats. The segment at 177-206 (GYWKTWIFWKTWIFWKTWIFRKTYIGWKTW) is 5 X 6 AA approximate repeats.

Brain; predominantly expressed in normal neuroectodermal tissues and in certain malignant tumors.

The protein is Cerebellar degeneration-related antigen 1 (CDR1) of Homo sapiens (Human).